The chain runs to 1534 residues: MAERANLVFHNKEIDGTAIKRLISRLIDHFGMGYTSHILDQIKTLGFHQATTTSISLGIEDLLTIPSKGWLVQDAEQQSFLLEKHYYYGAVHAVEKLRQSVEIWYATSEYLKQEMNSNFRITDPSNPVYLMSFSGARGNASQVHQLVGMRGLMADPQGQMIDLPIQSNLREGLSLTEYIISCYGARKGVVDTAVRTADAGYLTRRLVEVVQHIIVRRRDCGTIQGISVSPQNGMTEKLFVQTLIGRVLADDIYIGSRCIASRNQDIGIGLVNRFITAFRAQPFRAQPIYIRTPFTCRSTSWICQLCYGRSPTHGDLVELGEAVGIIAGQSIGEPGTQLTLRTFHTGGVFTGGTADLIRSPSNGKIQFNEDLVHPTRTRHGQPAFLCYIDLHVTIQSQDILHSVNIPLKSLILVQNDQYVESEQVIAEIRAGMSTLHFKEKVQKHIYSESDGEMHWSTDVYHAPEYQYGNLRRLPKTSHLWILSVSMCRSSIASFSLHKDQDQMNTYSFSVDGRYIFDFSMANDQVSHRLLDTFGKKDREILDYLTPDRIVSNGHWNCFYPSILQDNSDLLAKKRRNRFVVPLQYHQEQEKERISCLGISMEIPFMGVLRRNTIFAYFDDPRYRKDKRGSGIVKFRYRTLEEEYRTQEEEYRTREEEYRTREEEYRTREEDSEDEYESPENKYRTREGEGEYEILEDEYRTLEDEYETLEDEYGILEDEYRTLEKDSEEEYGSLENKYRTREGEGEYEILEEDSEEEYGSSEDGSEKEYGTLEEDSEEDSEEDSEDEYGSPEENSILKKEGFIEHRGTKEFSLKYQKEVDRFFFILQELHILPRSSSLKVLDNSIIGVDTQLTKNTRSRLGGLVRVKRKKSHTELKIFSGDIHFPEEADKILGGSLIPPEREKKDSKESKKRKNWVYVQRKKILKSKEKYFVSVRPAVAYEMDEGRNLATLFPQDLLQEEDNLQLRLVNFISHENSKLTQRIYHTNSQFVRTCLVVNWEQEEKEGARASLVEVRTNDLIRDFLRIELVKSTISYTRRRYDRTSVGLIPNNRLDRNNTNSFYSKAKIQSLSQHQEVIGTLLNRNKEYPSLMILLASNCSRIGLFKNSKYPNAVKESNPRIPIRDIFGLLGVIVPSISNFSSSYYLLTHNQILLKKYLFLDNLKQTFQVLQGLKYSLIDENKRISNFDSNIMLEPFHLNWHFLHHDSWEETLAIIHLGQFICENLCLFKSHIKKSGQIFIVNMDSFVLRAAKPYLATIGATVHGHYGKILYKGDRLVTFIYEKSRSSDITQGLPKVEQIFEARSIDSLSPNLERRIEDWNERIPRILGVPWGFLIGAELTIAQSRISLVNKIQKVYRSQGVQIHNRHIEIIIRQVTSKVRVSEDGMSNVFLPGELIGLLRAERAGRALDESIYYRAILLGITRASLNTQSFISEASFQETARVLAKAALRGRIDWLKGLKENVVLGGIIPVGTGFQKFVHRSPQDKNLYFEIQKKNLFASEMRDILFLHTELVSSDSDVTNNFYETSETPFTPIYTI.

Zn(2+) contacts are provided by Cys220, Cys296, Cys303, and Cys306. Basic and acidic residues-rich tracts occupy residues 644–668 and 678–688; these read RTQEEEYRTREEEYRTREEEYRTRE and PENKYRTREGE. 2 disordered regions span residues 644–698 and 719–800; these read RTQE…EDEY and YRTL…KKEG. Composition is skewed to acidic residues over residues 744–762 and 770–789; these read GEYEILEEDSEEEYGSSED and TLEEDSEEDSEEDSEDEYGS.

It belongs to the RNA polymerase beta' chain family. RpoC2 subfamily. In terms of assembly, in plastids the minimal PEP RNA polymerase catalytic core is composed of four subunits: alpha, beta, beta', and beta''. When a (nuclear-encoded) sigma factor is associated with the core the holoenzyme is formed, which can initiate transcription. The cofactor is Zn(2+).

The protein localises to the plastid. It is found in the chloroplast. It carries out the reaction RNA(n) + a ribonucleoside 5'-triphosphate = RNA(n+1) + diphosphate. Its function is as follows. DNA-dependent RNA polymerase catalyzes the transcription of DNA into RNA using the four ribonucleoside triphosphates as substrates. The sequence is that of DNA-directed RNA polymerase subunit beta'' from Saccharum officinarum (Sugarcane).